A 183-amino-acid chain; its full sequence is Peptide deformylase (183 aa).

Fe cation contacts are provided by C110 and H153. Residue E154 is part of the active site. Residue H157 coordinates Fe cation.

Belongs to the polypeptide deformylase family. Requires Fe(2+) as cofactor.

It carries out the reaction N-terminal N-formyl-L-methionyl-[peptide] + H2O = N-terminal L-methionyl-[peptide] + formate. Removes the formyl group from the N-terminal Met of newly synthesized proteins. Requires at least a dipeptide for an efficient rate of reaction. N-terminal L-methionine is a prerequisite for activity but the enzyme has broad specificity at other positions. The polypeptide is Peptide deformylase (Listeria monocytogenes serotype 4b (strain CLIP80459)).